Here is an 87-residue protein sequence, read N- to C-terminus: Keratin-associated protein 7-1 (87 aa).

Residues 43–84 (GCGCNGYSSLGYSFGGSNINNLGGCYGGSFYRPWGSGSGFGY) are 11 X 2 AA repeats of G-[YCGS].

It belongs to the KRTAP type 7 family. In terms of assembly, interacts with hair keratins. Expressed in the upper portion of the hair cortex.

Its function is as follows. In the hair cortex, hair keratin intermediate filaments are embedded in an interfilamentous matrix, consisting of hair keratin-associated proteins (KRTAP), which are essential for the formation of a rigid and resistant hair shaft through their extensive disulfide bond cross-linking with abundant cysteine residues of hair keratins. The matrix proteins include the high-sulfur and high-glycine-tyrosine keratins. The protein is Keratin-associated protein 7-1 (KRTAP7-1) of Homo sapiens (Human).